The primary structure comprises 376 residues: DnaJ homolog subfamily B member 12 (376 aa).

Met1 is modified (N-acetylmethionine). Residues 45 to 97 are disordered; the sequence is ALIESLNQKPQSTGDHPQPTDTTHTTTKKAGGTETPSANGEAGGGESAKGYTS. The segment covering 57 to 84 has biased composition (low complexity); the sequence is TGDHPQPTDTTHTTTKKAGGTETPSANG. A J domain is found at 111-175; the sequence is DYYEILGVSR…EKRKQYDQFG (65 aa). A Pros-methylhistidine modification is found at His186. Residues 243–263 form a helical membrane-spanning segment; sequence GGLGVFVQLMPILILILVSAL.

It belongs to the DnaJ family. DNAJB12/DNAJB14 subfamily. In terms of assembly, homodimer and homotetramer. Interacts (via J domain) with HSPA8/Hsc70. Forms a multiprotein complex, at least composed of DNAJB12, DNAJB14, HSPA8/Hsc70 and SGTA; interaction with DNAJB14 and HSPA8/Hsc70 is direct. Post-translationally, methylated at His-186 by METTL9.

It localises to the endoplasmic reticulum membrane. The protein resides in the nucleus membrane. In terms of biological role, acts as a co-chaperone with HSPA8/Hsc70; required to promote protein folding and trafficking, prevent aggregation of client proteins, and promote unfolded proteins to endoplasmic reticulum-associated degradation (ERAD) pathway. Acts by determining HSPA8/Hsc70's ATPase and polypeptide-binding activities. Can also act independently of HSPA8/Hsc70: together with DNAJB14, acts as a chaperone that promotes maturation of potassium channels KCND2 and KCNH2 by stabilizing nascent channel subunits and assembling them into tetramers. While stabilization of nascent channel proteins is dependent on HSPA8/Hsc70, the process of oligomerization of channel subunits is independent of HSPA8/Hsc70. When overexpressed, forms membranous structures together with DNAJB14 and HSPA8/Hsc70 within the nucleus; the role of these structures, named DJANGOs, is still unclear. The protein is DnaJ homolog subfamily B member 12 of Mus musculus (Mouse).